We begin with the raw amino-acid sequence, 320 residues long: L-lactate dehydrogenase A (320 aa).

Positions 88, 120, and 151 each coordinate substrate. Position 120 (asparagine 120) interacts with NAD(+). Catalysis depends on histidine 175, which acts as the Proton acceptor.

The protein belongs to the LDH/MDH superfamily. LDH family. In terms of assembly, homotetramer.

It localises to the cytoplasm. The enzyme catalyses (S)-lactate + NAD(+) = pyruvate + NADH + H(+). It participates in fermentation; pyruvate fermentation to lactate; (S)-lactate from pyruvate: step 1/1. Its function is as follows. Converts pyruvate to lactate. This chain is L-lactate dehydrogenase A (LDHA), found in Rhizopus oryzae (Mucormycosis agent).